A 282-amino-acid polypeptide reads, in one-letter code: Bis(5'-nucleosyl)-tetraphosphatase, symmetrical (282 aa).

This sequence belongs to the Ap4A hydrolase family.

It catalyses the reaction P(1),P(4)-bis(5'-adenosyl) tetraphosphate + H2O = 2 ADP + 2 H(+). In terms of biological role, hydrolyzes diadenosine 5',5'''-P1,P4-tetraphosphate to yield ADP. This chain is Bis(5'-nucleosyl)-tetraphosphatase, symmetrical, found in Shigella dysenteriae serotype 1 (strain Sd197).